The chain runs to 223 residues: Ribose-5-phosphate isomerase A (223 aa).

Residues 32-35 (TGST), 83-86 (DGAD), and 96-99 (KGGG) contribute to the substrate site. Residue Glu105 is the Proton acceptor of the active site. Lys123 is a substrate binding site.

It belongs to the ribose 5-phosphate isomerase family. Homodimer.

The catalysed reaction is aldehydo-D-ribose 5-phosphate = D-ribulose 5-phosphate. It participates in carbohydrate degradation; pentose phosphate pathway; D-ribose 5-phosphate from D-ribulose 5-phosphate (non-oxidative stage): step 1/1. Catalyzes the reversible conversion of ribose-5-phosphate to ribulose 5-phosphate. The chain is Ribose-5-phosphate isomerase A from Acinetobacter baumannii (strain SDF).